The chain runs to 187 residues: ATP synthase subunit b (187 aa).

The chain crosses the membrane as a helical span at residues 4–24; that stretch reads LALFALLMVPAILLASGHDSG.

This sequence belongs to the ATPase B chain family. As to quaternary structure, F-type ATPases have 2 components, F(1) - the catalytic core - and F(0) - the membrane proton channel. F(1) has five subunits: alpha(3), beta(3), gamma(1), delta(1), epsilon(1). F(0) has three main subunits: a(1), b(2) and c(10-14). The alpha and beta chains form an alternating ring which encloses part of the gamma chain. F(1) is attached to F(0) by a central stalk formed by the gamma and epsilon chains, while a peripheral stalk is formed by the delta and b chains.

It localises to the cell inner membrane. Its function is as follows. F(1)F(0) ATP synthase produces ATP from ADP in the presence of a proton or sodium gradient. F-type ATPases consist of two structural domains, F(1) containing the extramembraneous catalytic core and F(0) containing the membrane proton channel, linked together by a central stalk and a peripheral stalk. During catalysis, ATP synthesis in the catalytic domain of F(1) is coupled via a rotary mechanism of the central stalk subunits to proton translocation. Functionally, component of the F(0) channel, it forms part of the peripheral stalk, linking F(1) to F(0). In Sulfurovum sp. (strain NBC37-1), this protein is ATP synthase subunit b.